The chain runs to 130 residues: Small ribosomal subunit protein uS8 (130 aa).

Belongs to the universal ribosomal protein uS8 family. As to quaternary structure, part of the 30S ribosomal subunit. Contacts proteins S5 and S12.

Its function is as follows. One of the primary rRNA binding proteins, it binds directly to 16S rRNA central domain where it helps coordinate assembly of the platform of the 30S subunit. This is Small ribosomal subunit protein uS8 from Shewanella pealeana (strain ATCC 700345 / ANG-SQ1).